The primary structure comprises 638 residues: Guanylate-binding protein 7 (638 aa).

The segment at 1-310 (MASEIHMPGP…DAINSGATPC (310 aa)) is GTPase domain (Globular). In terms of domain architecture, GB1/RHD3-type G spans 35-277 (TQPVVVVAIV…FCSYIFTHAK (243 aa)). Residues 45 to 52 (GLYRTGKS), 67 to 69 (LGC), and 97 to 101 (DTEGL) contribute to the GTP site. An interaction with the CYBA-CYBB complex region spans residues 311-638 (LENAMAVLAQ…LRNPGKKIIS (328 aa)). Residues 590–638 (PSVFSQILDVAGSIFIAALPGAAKLVDLGMKILSSLCNRLRNPGKKIIS) form a C-terminal tail; required for its localization to cytoplasmic vesicle region.

The protein belongs to the TRAFAC class dynamin-like GTPase superfamily. GB1/RHD3 GTPase family. GB1 subfamily. Monomer and dimer. Interacts with CYBA, CYBA-CYBB complex and ATG4B. Interacts (via GB1/RHD3-type G domain) with NCF2 and NCF2-NCF4 complex.

It is found in the cytoplasmic vesicle membrane. The enzyme catalyses GTP + H2O = GDP + phosphate + H(+). It carries out the reaction GDP + H2O = GMP + phosphate + H(+). Functionally, interferon (IFN)-inducible GTPase that plays important roles in innate immunity against a diverse range of bacterial, viral and protozoan pathogens. Hydrolyzes GTP to GMP in two consecutive cleavage reactions and predominantly uses GTP and not GDP or GMP as the substrate. Following infection, recruited to the pathogen-containing vacuoles or vacuole-escaped bacteria and acts as a positive regulator of inflammasome assembly by promoting the release of inflammasome ligands from bacteria. Acts by promoting lysis of pathogen-containing vacuoles, releasing pathogens into the cytosol. Following pathogen release in the cytosol, promotes recruitment of proteins that mediate bacterial cytolysis: this liberates ligands that are detected by inflammasomes, such as lipopolysaccharide (LPS) that activates the non-canonical CASP4/CASP11 inflammasome or double-stranded DNA (dsDNA) that activates the AIM2 inflammasome. Also promotes IFN-gamma-mediated host defense against bacterial infections by regulating oxidative responses and bacteriolytic peptide generation. May help to assemble NADPH oxidase on phagosomal membranes by acting as a bridging protein between NADPH oxidase cytosolic subunits NCF2-NCF4 and the membrane subunits CYBA-CYBB. Participates along with GBP1 in trafficking monoubiquinated protein cargo to autolysosomes for generating ubiquitin-derived antimicrobial peptides. Facilitates influenza A virus replication by inhibiting the activation of NF-kappaB and JAK-STAT signaling pathways and the expression of type I, type III interferons and pro-inflammatory cytokines. Confers protection to several pathogens, including the bacterial pathogens Listeria monocytogenes and Mycobacterium bovis BCG as well as the protozoan pathogen Toxoplasma gondii. Required for disruption of the parasitophorous vacuole formed following T.gondii infection and subsequent killing of the parasite. The protein is Guanylate-binding protein 7 (GBP7) of Homo sapiens (Human).